The primary structure comprises 449 residues: Tubulin alpha-8 chain (449 aa).

The MREC motif signature appears at 1–4 (MREC). GTP-binding residues include Gln-11, Glu-71, Ser-140, Gly-144, Thr-145, Thr-179, Asn-206, and Asn-228. Glu-71 serves as a coordination point for Mg(2+). Residue Glu-254 is part of the active site.

It belongs to the tubulin family. As to quaternary structure, dimer of alpha and beta chains. A typical microtubule is a hollow water-filled tube with an outer diameter of 25 nm and an inner diameter of 15 nM. Alpha-beta heterodimers associate head-to-tail to form protofilaments running lengthwise along the microtubule wall with the beta-tubulin subunit facing the microtubule plus end conferring a structural polarity. Microtubules usually have 13 protofilaments but different protofilament numbers can be found in some organisms and specialized cells. The cofactor is Mg(2+). In terms of processing, some glutamate residues at the C-terminus are polyglycylated, resulting in polyglycine chains on the gamma-carboxyl group. Glycylation is mainly limited to tubulin incorporated into axonemes (cilia and flagella) whereas glutamylation is prevalent in neuronal cells, centrioles, axonemes, and the mitotic spindle. Both modifications can coexist on the same protein on adjacent residues, and lowering polyglycylation levels increases polyglutamylation, and reciprocally. Cilia and flagella glycylation is required for their stability and maintenance. Flagella glycylation controls sperm motility. Some glutamate residues at the C-terminus are polyglutamylated, resulting in polyglutamate chains on the gamma-carboxyl group. Polyglutamylation plays a key role in microtubule severing by spastin (SPAST). SPAST preferentially recognizes and acts on microtubules decorated with short polyglutamate tails: severing activity by SPAST increases as the number of glutamates per tubulin rises from one to eight, but decreases beyond this glutamylation threshold. Glutamylation is also involved in cilia motility. Post-translationally, the C-terminal phenylalanine residue is cleaved by MATCAP1/KIAA0895L. Expressed at highest levels in the testis, followed by skeletal and heart muscle. Expressed at low levels in the developing brain.

Its subcellular location is the cytoplasm. It localises to the cytoskeleton. It carries out the reaction GTP + H2O = GDP + phosphate + H(+). Functionally, tubulin is the major constituent of microtubules, a cylinder consisting of laterally associated linear protofilaments composed of alpha- and beta-tubulin heterodimers. Microtubules grow by the addition of GTP-tubulin dimers to the microtubule end, where a stabilizing cap forms. Below the cap, tubulin dimers are in GDP-bound state, owing to GTPase activity of alpha-tubulin. This is Tubulin alpha-8 chain (Tuba8) from Mus musculus (Mouse).